The following is a 447-amino-acid chain: N-succinylarginine dihydrolase (447 aa).

Substrate-binding positions include 19–28, Asn-110, and 137–138; these read AGLSFGNEAS and HR. The active site involves Glu-174. Substrate is bound at residue Arg-212. His-248 is a catalytic residue. Positions 250 and 359 each coordinate substrate. The active-site Nucleophile is Cys-365.

It belongs to the succinylarginine dihydrolase family. Homodimer.

It catalyses the reaction N(2)-succinyl-L-arginine + 2 H2O + 2 H(+) = N(2)-succinyl-L-ornithine + 2 NH4(+) + CO2. The protein operates within amino-acid degradation; L-arginine degradation via AST pathway; L-glutamate and succinate from L-arginine: step 2/5. In terms of biological role, catalyzes the hydrolysis of N(2)-succinylarginine into N(2)-succinylornithine, ammonia and CO(2). The protein is N-succinylarginine dihydrolase of Escherichia coli O17:K52:H18 (strain UMN026 / ExPEC).